The sequence spans 291 residues: 33 kDa chaperonin (291 aa).

Intrachain disulfides connect C237/C239 and C270/C273.

It belongs to the HSP33 family. In terms of processing, under oxidizing conditions two disulfide bonds are formed involving the reactive cysteines. Under reducing conditions zinc is bound to the reactive cysteines and the protein is inactive.

Its subcellular location is the cytoplasm. Redox regulated molecular chaperone. Protects both thermally unfolding and oxidatively damaged proteins from irreversible aggregation. Plays an important role in the bacterial defense system toward oxidative stress. This Halalkalibacterium halodurans (strain ATCC BAA-125 / DSM 18197 / FERM 7344 / JCM 9153 / C-125) (Bacillus halodurans) protein is 33 kDa chaperonin.